A 288-amino-acid chain; its full sequence is Polyamine aminopropyltransferase (288 aa).

Positions 9-238 (ETLHDQFGQY…GIMTFAWATD (230 aa)) constitute a PABS domain. Q33 lines the S-methyl-5'-thioadenosine pocket. The spermidine site is built by H64 and D88. S-methyl-5'-thioadenosine-binding positions include E108 and 140-141 (DG). D158 serves as the catalytic Proton acceptor. 158 to 161 (DCTD) is a binding site for spermidine. Residue P165 coordinates S-methyl-5'-thioadenosine.

The protein belongs to the spermidine/spermine synthase family. In terms of assembly, homodimer or homotetramer.

It is found in the cytoplasm. The enzyme catalyses S-adenosyl 3-(methylsulfanyl)propylamine + putrescine = S-methyl-5'-thioadenosine + spermidine + H(+). It participates in amine and polyamine biosynthesis; spermidine biosynthesis; spermidine from putrescine: step 1/1. Catalyzes the irreversible transfer of a propylamine group from the amino donor S-adenosylmethioninamine (decarboxy-AdoMet) to putrescine (1,4-diaminobutane) to yield spermidine. This is Polyamine aminopropyltransferase from Shigella boydii serotype 18 (strain CDC 3083-94 / BS512).